A 430-amino-acid chain; its full sequence is MVNIVVVGLQWGDEGKGKVVDWLSTNADAVVRFQGGNNAGHTIVINDKVYKLNLLPSSVLQNNKLSIIGNGVVLDPYALVSEIDNLKSSGINITTQNLAISESCPLVLSVHKQADILFEQLRQDTIGTTNKGIGPCYADKISRRAIRVCDLLDTKDLLYSKVNHLLIYHNLLRKSLNTPPIKAEDIVNELLNIAPKILPFVQPVWKTIYNLTQQNKTIIFEGAQGTFLDIDHGTYPFVTSSNTIASQAWVGCGINPSNKSYILGLVKAYTTRVGNGPFFTEQNNDIGKIMFKTGKELGTVSNRKRRCGWFDAVLARQAIMLSGVSGLVMTKLDVLDQFSEIKICVKYKYGDKTYDYLPASPHIQSNLEPIYEILPGWQTSTFGSVSYKDLPQNAILYIKKIEEILKVPIHLISTGPERNSMIILNNDFLQ.

Residues 12 to 18 (GDEGKGK) and 40 to 42 (GHT) contribute to the GTP site. Aspartate 13 (proton acceptor) is an active-site residue. Mg(2+) is bound by residues aspartate 13 and glycine 40. Residues 13 to 16 (DEGK), 38 to 41 (NAGH), threonine 129, arginine 143, glutamine 224, threonine 239, and arginine 303 contribute to the IMP site. Histidine 41 (proton donor) is an active-site residue. 299–305 (TVSNRKR) provides a ligand contact to substrate. Residues arginine 305, 331 to 333 (KLD), and 413 to 415 (STG) contribute to the GTP site.

The protein belongs to the adenylosuccinate synthetase family. In terms of assembly, homodimer. Mg(2+) serves as cofactor.

The protein localises to the cytoplasm. It catalyses the reaction IMP + L-aspartate + GTP = N(6)-(1,2-dicarboxyethyl)-AMP + GDP + phosphate + 2 H(+). It functions in the pathway purine metabolism; AMP biosynthesis via de novo pathway; AMP from IMP: step 1/2. Plays an important role in the de novo pathway of purine nucleotide biosynthesis. Catalyzes the first committed step in the biosynthesis of AMP from IMP. This chain is Adenylosuccinate synthetase, found in Ehrlichia chaffeensis (strain ATCC CRL-10679 / Arkansas).